Reading from the N-terminus, the 507-residue chain is ATP synthase subunit alpha, chloroplastic (507 aa).

An ATP-binding site is contributed by 170–177; the sequence is GDRQTGKT.

Belongs to the ATPase alpha/beta chains family. F-type ATPases have 2 components, CF(1) - the catalytic core - and CF(0) - the membrane proton channel. CF(1) has five subunits: alpha(3), beta(3), gamma(1), delta(1), epsilon(1). CF(0) has four main subunits: a, b, b' and c.

It localises to the plastid. The protein localises to the chloroplast thylakoid membrane. It catalyses the reaction ATP + H2O + 4 H(+)(in) = ADP + phosphate + 5 H(+)(out). In terms of biological role, produces ATP from ADP in the presence of a proton gradient across the membrane. The alpha chain is a regulatory subunit. The polypeptide is ATP synthase subunit alpha, chloroplastic (Gossypium barbadense (Sea Island cotton)).